A 737-amino-acid polypeptide reads, in one-letter code: Translation initiation factor IF-2 (737 aa).

The interval 55–152 (KKKEHIQHNK…PVPPRKNKPL (98 aa)) is disordered. The span at 60-70 (IQHNKNKDNFH) shows a compositional bias: basic and acidic residues. Positions 88-98 (KNVHKNNRKRS) are enriched in basic residues. Residues 105–121 (NNNAKNGQRNNRNNRSN) show a composition bias toward low complexity. Positions 122 to 131 (NKFKNKRNNN) are enriched in basic residues. Residues 132–142 (NKRNNNFKKGN) show a composition bias toward low complexity. Residues 238 to 407 (KRPPVVTIMG…LLEAEMLELH (170 aa)) form the tr-type G domain. The interval 247–254 (GHVDHGKT) is G1. Residue 247-254 (GHVDHGKT) coordinates GTP. The tract at residues 272–276 (GITQH) is G2. The tract at residues 293–296 (DTPG) is G3. Residues 293–297 (DTPGH) and 347–350 (NKID) contribute to the GTP site. The G4 stretch occupies residues 347–350 (NKID). A G5 region spans residues 383-385 (SAK).

It belongs to the TRAFAC class translation factor GTPase superfamily. Classic translation factor GTPase family. IF-2 subfamily.

The protein resides in the cytoplasm. In terms of biological role, one of the essential components for the initiation of protein synthesis. Protects formylmethionyl-tRNA from spontaneous hydrolysis and promotes its binding to the 30S ribosomal subunits. Also involved in the hydrolysis of GTP during the formation of the 70S ribosomal complex. This chain is Translation initiation factor IF-2, found in Ligilactobacillus salivarius (strain UCC118) (Lactobacillus salivarius).